Here is a 230-residue protein sequence, read N- to C-terminus: 3-beta-hydroxysteroid-Delta(8),Delta(7)-isomerase (230 aa).

The residue at position 2 (Thr-2) is an N-acetylthreonine. 4 helical membrane-spanning segments follow: residues 29–49, 66–86, 121–141, and 185–205; these read WHIL…TWLL, LCWF…FVLY, METI…IAFL, and FWFY…VLVL. The EXPERA domain maps to 61–204; sequence WRRLSLCWFA…LWLVLPGVLV (144 aa).

It belongs to the EBP family.

It localises to the endoplasmic reticulum membrane. It is found in the nucleus envelope. The protein resides in the cytoplasmic vesicle. It catalyses the reaction lathosterol = 5alpha-cholest-8-en-3beta-ol. It carries out the reaction zymosterol = 5alpha-cholesta-7,24-dien-3beta-ol. The catalysed reaction is 5,6alpha-epoxy-5alpha-cholestan-3beta-ol + H2O = 5alpha-cholestane-3beta,5,6beta-triol. The enzyme catalyses 5,6beta-epoxy-5beta-cholestan-3beta-ol + H2O = 5alpha-cholestane-3beta,5,6beta-triol. It functions in the pathway steroid biosynthesis; cholesterol biosynthesis. Its activity is regulated as follows. Cholestenol Delta-isomerase and cholesterol-5,6-epoxide hydrolase (ChEH) activities are inhibited by tamoxifen and the selective AEBS ligand (4-benzyl-phenoxy)-ethyl-N-pyrrolidine (PBPE). ChEH activity is inhibited by oleic acid. Isomerase that catalyzes the conversion of Delta(8)-sterols to their corresponding Delta(7)-isomers a catalytic step in the postlanosterol biosynthesis of cholesterol. Functionally, component of the microsomal antiestrogen binding site (AEBS), a multiproteic complex at the ER membrane that consists of an association between EBP and 7-dehydrocholesterol reductase/DHCR7. This complex is responsible for cholesterol-5,6-epoxide hydrolase (ChEH) activity, which consists in the hydration of cholesterol-5,6-epoxides (5,6-EC) into cholestane-3beta,5alpha,6beta-triol (CT). The precise role of each component of this complex has not been described yet. The sequence is that of 3-beta-hydroxysteroid-Delta(8),Delta(7)-isomerase from Homo sapiens (Human).